We begin with the raw amino-acid sequence, 535 residues long: MTKYIFVTGGVVSSLGKGITAASLGRLLKNRGLNVTIQKFDPYINVDPGTMSPYQHGEVFVTDDGAETDLDLGHYERFIDINLNKYSNVTTGKIYSSVLQKERRGEYLGGTVQVIPHITNEIKERVYRSGRETNADVVITEIGGTVGDIESLPFLEAIRQIKSDIGRDNVMYIHCTLIPYLKAAGEMKTKPTQHSVKELRSLGIQPNIIVVRTEMPVSQDMKDKLALFCDIDTKAVIEARDADTLYAVPLSLQEQNMDQIVCDHLKLDNPAADMTEWTALVEKVRNLSKKTKIALVGKYVELQDAYISVVEALRHAGYSFDTDVEVKWVNAEHVTAENVQELVGDTDGILVPGGFGDRGVEGKIVAIQYARENKVPFLGICLGMQLASIEFARNVLGLEGANSSEINPDTPYAIIDLLPEQKDVEDLGGTLRLGLYPCKLSEETNAYNAYNEPVVYERHRHRYEFNNQFRPDMEKEGFVFSGTSPDGRLVEIIELKDHPWFVAAQFHPELVSRPNRPQPLFHDFVKASITNKESK.

Residues 1–267 are amidoligase domain; sequence MTKYIFVTGG…DQIVCDHLKL (267 aa). Ser-13 is a CTP binding site. Ser-13 provides a ligand contact to UTP. 14–19 provides a ligand contact to ATP; it reads SLGKGI. An L-glutamine-binding site is contributed by Tyr-54. Asp-71 contributes to the ATP binding site. Asp-71 and Glu-141 together coordinate Mg(2+). CTP-binding positions include 148-150, 188-193, and Lys-224; these read DIE and KTKPTQ. Residues 188-193 and Lys-224 each bind UTP; that span reads KTKPTQ. 240-242 is an ATP binding site; that stretch reads RDA. One can recognise a Glutamine amidotransferase type-1 domain in the interval 292 to 534; the sequence is KIALVGKYVE…VKASITNKES (243 aa). An L-glutamine-binding site is contributed by Gly-354. Cys-381 serves as the catalytic Nucleophile; for glutamine hydrolysis. L-glutamine is bound by residues 382-385, Glu-405, and Arg-462; that span reads LGMQ. Residues His-507 and Glu-509 contribute to the active site.

It belongs to the CTP synthase family. As to quaternary structure, homotetramer.

It carries out the reaction UTP + L-glutamine + ATP + H2O = CTP + L-glutamate + ADP + phosphate + 2 H(+). The catalysed reaction is L-glutamine + H2O = L-glutamate + NH4(+). It catalyses the reaction UTP + NH4(+) + ATP = CTP + ADP + phosphate + 2 H(+). It participates in pyrimidine metabolism; CTP biosynthesis via de novo pathway; CTP from UDP: step 2/2. Its activity is regulated as follows. Allosterically activated by GTP, when glutamine is the substrate; GTP has no effect on the reaction when ammonia is the substrate. The allosteric effector GTP functions by stabilizing the protein conformation that binds the tetrahedral intermediate(s) formed during glutamine hydrolysis. Inhibited by the product CTP, via allosteric rather than competitive inhibition. Functionally, catalyzes the ATP-dependent amination of UTP to CTP with either L-glutamine or ammonia as the source of nitrogen. Regulates intracellular CTP levels through interactions with the four ribonucleotide triphosphates. The chain is CTP synthase from Bacillus thuringiensis subsp. konkukian (strain 97-27).